The sequence spans 388 residues: GTPase Obg (388 aa).

The region spanning 4-162 (SNFVDYVKIY…MTVILELKLL (159 aa)) is the Obg domain. The segment at 18-45 (KGGRGSTHMRREKYTPNGGPDGGDGGRG) is disordered. Positions 36 to 45 (GPDGGDGGRG) are enriched in gly residues. The OBG-type G domain maps to 163–329 (ADVGLVGFPN…LKDILWTELN (167 aa)). Residues 169–176 (GFPNAGKS), 194–198 (FTTLE), 216–219 (DIPG), 283–286 (TKSD), and 310–312 (SSV) each bind GTP. 2 residues coordinate Mg(2+): Ser-176 and Thr-196. The tract at residues 352 to 388 (LKDMGEDEELDYEYEDDGDGDEDDLDYEYEEEDWEDK) is disordered. Positions 356–388 (GEDEELDYEYEDDGDGDEDDLDYEYEEEDWEDK) are enriched in acidic residues.

This sequence belongs to the TRAFAC class OBG-HflX-like GTPase superfamily. OBG GTPase family. Monomer. The cofactor is Mg(2+).

It localises to the cytoplasm. Its function is as follows. An essential GTPase which binds GTP, GDP and possibly (p)ppGpp with moderate affinity, with high nucleotide exchange rates and a fairly low GTP hydrolysis rate. Plays a role in control of the cell cycle, stress response, ribosome biogenesis and in those bacteria that undergo differentiation, in morphogenesis control. The chain is GTPase Obg from Bacteroides fragilis (strain ATCC 25285 / DSM 2151 / CCUG 4856 / JCM 11019 / LMG 10263 / NCTC 9343 / Onslow / VPI 2553 / EN-2).